A 154-amino-acid polypeptide reads, in one-letter code: Egg-lysin (154 aa).

The signal sequence occupies residues 1 to 18 (MKLLVLCIFAMMATLAMS).

As to quaternary structure, homodimer. In terms of tissue distribution, sperm.

Functionally, dissolves the egg vitelline layer nonenzymatically during fertilization. It creates a hole of about 3 mu-m in diameter through which the sperm pass. The sequence is that of Egg-lysin from Haliotis sorenseni (White abalone).